Here is a 359-residue protein sequence, read N- to C-terminus: Adenosine deaminase (359 aa).

2 residues coordinate Zn(2+): histidine 15 and histidine 17. Positions 17, 19, and 184 each coordinate substrate. Histidine 213 is a Zn(2+) binding site. The active-site Proton donor is the glutamate 216. Zn(2+) is bound at residue aspartate 295. Aspartate 296 lines the substrate pocket.

It belongs to the metallo-dependent hydrolases superfamily. Adenosine and AMP deaminases family. Requires Zn(2+) as cofactor.

Its subcellular location is the cell membrane. The protein resides in the cell junction. The protein localises to the cytoplasmic vesicle lumen. It is found in the cytoplasm. It localises to the lysosome. It catalyses the reaction adenosine + H2O + H(+) = inosine + NH4(+). The catalysed reaction is 2'-deoxyadenosine + H2O + H(+) = 2'-deoxyinosine + NH4(+). Functionally, catalyzes the hydrolytic deamination of adenosine and 2-deoxyadenosine. Plays an important role in purine metabolism and in adenosine homeostasis. Modulates signaling by extracellular adenosine, and so contributes indirectly to cellular signaling events. May act as a positive regulator of T-cell coactivation. This is Adenosine deaminase (ada) from Danio rerio (Zebrafish).